The primary structure comprises 526 residues: Protein MGF 505-2R (526 aa).

It belongs to the asfivirus MGF 505 family.

Functionally, plays a role in virus cell tropism, and may be required for efficient virus replication in macrophages. This African swine fever virus (isolate Pig/Kenya/KEN-50/1950) (ASFV) protein is Protein MGF 505-2R.